Here is a 96-residue protein sequence, read N- to C-terminus: ESAT-6-like protein EsxR (96 aa).

Belongs to the WXG100 family. ESAT-6 subfamily.

It localises to the secreted. This Mycobacterium leprae (strain TN) protein is ESAT-6-like protein EsxR.